We begin with the raw amino-acid sequence, 116 residues long: MAGRSGDSDTELLKAVKCIKILYQSNPYPKPEGTRQARRNRRRRWRARQRQIRALSDRILSSCLGRSEEPVPLQLPPLERLHINCSEDCGQGPEEGVGSSQISGESHAVLESGTKE.

Serine 5 and serine 8 each carry phosphoserine; by host CK2. Positions 18-26 are homomultimerization; that stretch reads CIKILYQSN. Residues 27–47 form a disordered region; that stretch reads PYPKPEGTRQARRNRRRRWRA. Positions 34–50 match the Nuclear localization signal and RNA-binding (RRE) motif; that stretch reads TRQARRNRRRRWRARQR. Over residues 36–47 the composition is skewed to basic residues; sequence QARRNRRRRWRA. A Nuclear export signal and binding to XPO1 motif is present at residues 73-84; sequence LQLPPLERLHIN. A disordered region spans residues 87–116; the sequence is EDCGQGPEEGVGSSQISGESHAVLESGTKE. The residue at position 99 (serine 99) is a Phosphoserine; by host.

This sequence belongs to the HIV-1 REV protein family. Homomultimer; when bound to the RRE. Multimeric assembly is essential for activity and may involve XPO1. Binds to human KPNB1, XPO1, TNPO1, RANBP5 and IPO7. Interacts with the viral Integrase. Interacts with human KHDRBS1. Interacts with human NAP1; this interaction decreases Rev multimerization and stimulates its activity. Interacts with human DEAD-box helicases DDX3 and DDX24; these interactions may serve for viral RNA export to the cytoplasm and packaging, respectively. Interacts with human PSIP1; this interaction may inhibit HIV-1 DNA integration by promoting dissociation of the Integrase-LEDGF/p75 complex. In terms of processing, asymmetrically arginine dimethylated at one site by host PRMT6. Methylation impairs the RNA-binding activity and export of viral RNA from the nucleus to the cytoplasm. Phosphorylated by protein kinase CK2. Presence of, and maybe binding to the N-terminus of the regulatory beta subunit of CK2 is necessary for CK2-mediated Rev's phosphorylation.

Its subcellular location is the host nucleus. The protein localises to the host nucleolus. The protein resides in the host cytoplasm. Its function is as follows. Escorts unspliced or incompletely spliced viral pre-mRNAs (late transcripts) out of the nucleus of infected cells. These pre-mRNAs carry a recognition sequence called Rev responsive element (RRE) located in the env gene, that is not present in fully spliced viral mRNAs (early transcripts). This function is essential since most viral proteins are translated from unspliced or partially spliced pre-mRNAs which cannot exit the nucleus by the pathway used by fully processed cellular mRNAs. Rev itself is translated from a fully spliced mRNA that readily exits the nucleus. Rev's nuclear localization signal (NLS) binds directly to KPNB1/Importin beta-1 without previous binding to KPNA1/Importin alpha-1. KPNB1 binds to the GDP bound form of RAN (Ran-GDP) and targets Rev to the nucleus. In the nucleus, the conversion from Ran-GDP to Ran-GTP dissociates Rev from KPNB1 and allows Rev's binding to the RRE in viral pre-mRNAs. Rev multimerization on the RRE via cooperative assembly exposes its nuclear export signal (NES) to the surface. Rev can then form a complex with XPO1/CRM1 and Ran-GTP, leading to nuclear export of the complex. Conversion from Ran-GTP to Ran-GDP mediates dissociation of the Rev/RRE/XPO1/RAN complex, so that Rev can return to the nucleus for a subsequent round of export. Beside KPNB1, also seems to interact with TNPO1/Transportin-1, RANBP5/IPO5 and IPO7/RANBP7 for nuclear import. The nucleoporin-like HRB/RIP is an essential cofactor that probably indirectly interacts with Rev to release HIV RNAs from the perinuclear region to the cytoplasm. This is Protein Rev from Human immunodeficiency virus type 1 group M subtype F1 (isolate VI850) (HIV-1).